The following is a 220-amino-acid chain: Ripening-related protein grip22 (220 aa).

The N-terminal stretch at 1 to 27 is a signal peptide; sequence MAKSALVWLASVCLVFNILSLPFLALG.

This sequence belongs to the kiwellin family. In terms of tissue distribution, expressed in ripening fruits.

It is found in the secreted. The polypeptide is Ripening-related protein grip22 (grip22) (Vitis vinifera (Grape)).